Reading from the N-terminus, the 221-residue chain is Ribosomal RNA small subunit methyltransferase G (221 aa).

Residues G78, F83, and R150 each contribute to the S-adenosyl-L-methionine site.

Belongs to the methyltransferase superfamily. RNA methyltransferase RsmG family.

The protein resides in the cytoplasm. Specifically methylates the N7 position of a guanine in 16S rRNA. This is Ribosomal RNA small subunit methyltransferase G from Bifidobacterium longum (strain DJO10A).